Reading from the N-terminus, the 431-residue chain is Serine--tRNA ligase (431 aa).

An L-serine-binding site is contributed by 237-239 (TAE). Position 268–270 (268–270 (RSE)) interacts with ATP. E291 provides a ligand contact to L-serine. 355 to 358 (EISS) provides a ligand contact to ATP. S390 serves as a coordination point for L-serine.

This sequence belongs to the class-II aminoacyl-tRNA synthetase family. Type-1 seryl-tRNA synthetase subfamily. Homodimer. The tRNA molecule binds across the dimer.

It is found in the cytoplasm. The enzyme catalyses tRNA(Ser) + L-serine + ATP = L-seryl-tRNA(Ser) + AMP + diphosphate + H(+). It carries out the reaction tRNA(Sec) + L-serine + ATP = L-seryl-tRNA(Sec) + AMP + diphosphate + H(+). Its pathway is aminoacyl-tRNA biosynthesis; selenocysteinyl-tRNA(Sec) biosynthesis; L-seryl-tRNA(Sec) from L-serine and tRNA(Sec): step 1/1. Its function is as follows. Catalyzes the attachment of serine to tRNA(Ser). Is also able to aminoacylate tRNA(Sec) with serine, to form the misacylated tRNA L-seryl-tRNA(Sec), which will be further converted into selenocysteinyl-tRNA(Sec). In Neisseria meningitidis serogroup A / serotype 4A (strain DSM 15465 / Z2491), this protein is Serine--tRNA ligase.